A 334-amino-acid polypeptide reads, in one-letter code: Probable allantoicase (334 aa).

This sequence belongs to the allantoicase family.

It catalyses the reaction allantoate + H2O = (S)-ureidoglycolate + urea. Its pathway is nitrogen metabolism; (S)-allantoin degradation; (S)-ureidoglycolate from allantoate (aminidohydrolase route): step 1/1. The protein is Probable allantoicase of Acinetobacter baylyi (strain ATCC 33305 / BD413 / ADP1).